Here is a 152-residue protein sequence, read N- to C-terminus: Respiratory supercomplex factor 1, mitochondrial (152 aa).

The region spanning 6–97 (YPSSFDKKDE…RQQVTQRKTD (92 aa)) is the HIG1 domain. The next 2 membrane-spanning stretches (helical) occupy residues 34-50 (LVPIGCLATCVAVALAA) and 64-86 (WFRWRVGLQGLTLVALVGGSYIY). A coiled-coil region spans residues 113-143 (IQELERRDQETKRNKERARLARARLEAERST).

The protein belongs to the RCF1 family. Associates with the respiratory chain complex III/complex IV supercomplex.

The protein localises to the mitochondrion membrane. In terms of biological role, cytochrome c oxidase subunit which plays a role in assembly of respiratory supercomplexes. This chain is Respiratory supercomplex factor 1, mitochondrial (RCF1), found in Komagataella phaffii (strain GS115 / ATCC 20864) (Yeast).